Reading from the N-terminus, the 218-residue chain is Small ribosomal subunit protein uS3 (218 aa).

In terms of domain architecture, KH type-2 spans 38–106 (IREYINKRLQ…REHINIVEIK (69 aa)).

It belongs to the universal ribosomal protein uS3 family. As to quaternary structure, part of the 30S ribosomal subunit. Forms a tight complex with proteins S10 and S14.

Functionally, binds the lower part of the 30S subunit head. Binds mRNA in the 70S ribosome, positioning it for translation. The chain is Small ribosomal subunit protein uS3 from Geobacillus stearothermophilus (Bacillus stearothermophilus).